Reading from the N-terminus, the 1020-residue chain is Sodium/potassium-transporting ATPase subunit alpha-2 (1020 aa).

Residues 1–5 (MGRGA) constitute a propeptide that is removed on maturation. A disordered region spans residues 1-31 (MGRGAGREYSPAATTAENGGGKKKQKEKELD). Over 6–85 (GREYSPAATT…NALTPPPTTP (80 aa)) the chain is Cytoplasmic. Ser-10 carries the phosphoserine modification. The interval 80–82 (PPP) is interaction with phosphoinositide-3 kinase. The helical transmembrane segment at 86-106 (EWVKFCRQLFGGFSILLWIGA) threads the bilayer. Residues 107 to 129 (ILCFLAYGIQAAMEDEPSNDNLY) lie on the Extracellular side of the membrane. A helical membrane pass occupies residues 130 to 150 (LGVVLAAVVIVTGCFSYYQEA). The Cytoplasmic portion of the chain corresponds to 151 to 286 (KSSKIMDSFK…VGRTPIAMEI (136 aa)). Positions 212 to 227 (DNSSLTGESEPQTRSP) are enriched in polar residues. The interval 212 to 231 (DNSSLTGESEPQTRSPEFTH) is disordered. Residues 287–306 (EHFIQLITGVAVFLGVSFFV) traverse the membrane as a helical segment. The Extracellular portion of the chain corresponds to 307–318 (LSLILGYSWLEA). Residues 319 to 336 (VIFLIGIIVANVPEGLLA) form a helical membrane-spanning segment. Over 337-769 (TVTVCLTLTA…EEGRLIFDNL (433 aa)) the chain is Cytoplasmic. The active-site 4-aspartylphosphate intermediate is Asp-374. A phosphoserine mark is found at Ser-439, Ser-450, and Ser-559. Thr-570 bears the Phosphothreonine mark. 2 positions are modified to phosphoserine: Ser-587 and Ser-672. Asp-714 and Asp-718 together coordinate Mg(2+). Residues 770-789 (KKSIAYTLTSNIPEITPFLL) traverse the membrane as a helical segment. Topologically, residues 790-799 (FIIANIPLPL) are extracellular. Residues 800–820 (GTVTILCIDLGTDMVPAISLA) form a helical membrane-spanning segment. At 821 to 840 (YEAAESDIMKRQPRNPQTDK) the chain is on the cytoplasmic side. Position 826 is a phosphoserine (Ser-826). Residues 841 to 863 (LVNERLISMAYGQIGMIQALGGF) form a helical membrane-spanning segment. Residues 864–915 (FTYFVILAENGFLPSRLLGIRLDWDDRSMNDLEDSYGQEWTYEQRKVVEFTC) lie on the Extracellular side of the membrane. The helical transmembrane segment at 916–935 (HTAFFASIVVVQWADLIICK) threads the bilayer. Over 936–948 (TRRNSVFQQGMKN) the chain is Cytoplasmic. Ser-940 bears the Phosphoserine; by PKA mark. A helical membrane pass occupies residues 949-967 (KILIFGLLEETALAAFLSY). The Extracellular portion of the chain corresponds to 968–982 (CPGMGVALRMYPLKV). Residues 983 to 1003 (TWWFCAFPYSLLIFIYDEVRK) form a helical membrane-spanning segment. Topologically, residues 1004–1020 (LILRRYPGGWVEKETYY) are cytoplasmic.

Belongs to the cation transport ATPase (P-type) (TC 3.A.3) family. Type IIC subfamily. The sodium/potassium-transporting ATPase is composed of a catalytic alpha subunit, an auxiliary non-catalytic beta subunit and an additional regulatory subunit. Interacts with regulatory subunit FXYD1.

Its subcellular location is the membrane. The protein localises to the cell membrane. It catalyses the reaction K(+)(out) + Na(+)(in) + ATP + H2O = K(+)(in) + Na(+)(out) + ADP + phosphate + H(+). Functionally, this is the catalytic component of the active enzyme, which catalyzes the hydrolysis of ATP coupled with the exchange of sodium and potassium ions across the plasma membrane. This action creates the electrochemical gradient of sodium and potassium, providing the energy for active transport of various nutrients. This is Sodium/potassium-transporting ATPase subunit alpha-2 (ATP1A2) from Sus scrofa (Pig).